Consider the following 89-residue polypeptide: Large ribosomal subunit protein bL28 (89 aa).

Belongs to the bacterial ribosomal protein bL28 family.

This is Large ribosomal subunit protein bL28 from Chlamydia caviae (strain ATCC VR-813 / DSM 19441 / 03DC25 / GPIC) (Chlamydophila caviae).